The sequence spans 289 residues: Homeobox protein Nkx-2.6 (289 aa).

2 disordered regions span residues 75–125 (GSNP…PQRK) and 259–289 (TPLASSGFSPGGQSAAPQGHLPATPQGVTAW). The segment at residues 123-182 (QRKSRVLFSQAQVLALERRFKQQRYLTAPEREHLASALQLTSTQVKIWFQNRRYKSKSQR) is a DNA-binding region (homeobox). A compositionally biased stretch (polar residues) spans 261-274 (LASSGFSPGGQSAA).

This sequence belongs to the NK-2 homeobox family. In terms of tissue distribution, not detected in any neonate or adult tissues.

It is found in the nucleus. Functionally, acts as a transcriptional activator. In conjunction with NKX2-5, may play a role in both pharyngeal and cardiac embryonic development. This chain is Homeobox protein Nkx-2.6 (Nkx2-6), found in Mus musculus (Mouse).